The following is a 464-amino-acid chain: Probable mannosyltransferase KTR4 (464 aa).

Residues 1–11 (MRFLSKRILKP) are Cytoplasmic-facing. A helical; Signal-anchor for type II membrane protein membrane pass occupies residues 12–32 (VLSVIILISIAVTVVLYFLTA). Residues 33–130 (NENYLQAVKD…NLVRSGDPLA (98 aa)) are stem region. Over 33–464 (NENYLQAVKD…SMSEEELEMY (432 aa)) the chain is Lumenal. Positions 131–464 (GKAKGTILSL…SMSEEELEMY (334 aa)) are catalytic. E352 (nucleophile) is an active-site residue.

It belongs to the glycosyltransferase 15 family.

The protein resides in the membrane. In terms of biological role, possible glycosyltransferase that transfers an alpha-D-mannosyl residue from GDP-mannose into lipid-linked oligosaccharide, forming an alpha-(1-&gt;2)-D-mannosyl-D-mannose linkage. The sequence is that of Probable mannosyltransferase KTR4 (KTR4) from Saccharomyces cerevisiae (strain ATCC 204508 / S288c) (Baker's yeast).